We begin with the raw amino-acid sequence, 301 residues long: MFESNMVLQTLSSSSPPIHRLYLHHSQILPSSGSPSKISLQIHGRTLAIRSFHDYVFAEISARGLPALNKASLKKLPIKGSTFLLGQSLLMVSAHPQLAAAAEIIKPEPIYEVGELFELSIQLSYLLLLLGLLGVGTFYVIRQVLVRRELDLSAKELQEQVRSGDASATELFELGAVMLRRKFYPAANKFLQQAIQKWDGDDQDLAQVYNALGVSYVREDKLDKGIAQFEMAVKLQPGYVTAWNNLGDAYEKKKELPLALNAFEEVLLFDPNNKVARPRRDALKDRVKLYKGVVAVKSKKR.

The transit peptide at 1 to 61 directs the protein to the chloroplast; the sequence is MFESNMVLQT…FHDYVFAEIS (61 aa). 2 helical membrane-spanning segments follow: residues 82-102 and 121-141; these read TFLL…AAAA and IQLS…FYVI. 3 TPR repeats span residues 168 to 201, 206 to 239, and 240 to 273; these read ATEL…WDGD, AQVY…QPGY, and VTAW…DPNN.

Interacts with PSA3.

Its subcellular location is the plastid. It is found in the chloroplast thylakoid membrane. In terms of biological role, nuclear genome-encoded factor required for the accumulation of photosystem I (PSI). Functions as a PSI biogenesis factor. Cooperates with PSA3 to promote the stable assembly of PSI in the thylakoid membrane. May target primarily the PsaC subunit. This chain is Tetratricopeptide repeat domain-containing protein PYG7, chloroplastic, found in Arabidopsis thaliana (Mouse-ear cress).